A 1712-amino-acid chain; its full sequence is Collagen alpha-2(IV) chain (1712 aa).

The first 25 residues, 1–25 (MGRDQRAVAGPALRRWLLLGTVTVG), serve as a signal peptide directing secretion. Residues 26–183 (FLAQSVLAGV…LPKEERDRYR (158 aa)) constitute a propeptide, N-terminal propeptide (7S domain). Disordered regions lie at residues 60–237 (RGQP…GFYG), 302–448 (GLRG…PDGF), 507–640 (INGE…DAGL), 690–906 (GLPG…SPGF), and 1157–1480 (TGPP…GLPG). Over residues 68-84 (PQGYNGPPGLQGFPGLQ) the composition is skewed to low complexity. Residues 121 to 130 (GHPGQGGPRG) are compositionally biased toward gly residues. A glycan (N-linked (GlcNAc...) asparagine) is linked at N138. The segment covering 140–153 (TQGDSGPQGPPGSE) has biased composition (low complexity). The segment covering 175 to 186 (PKEERDRYRGEP) has biased composition (basic and acidic residues). Residues 184-1484 (GEPGEPGLVG…SPGLPGMPGR (1301 aa)) are triple-helical region. Pro residues-rich tracts occupy residues 215–224 (RPGPPGPPGP) and 433–445 (PPGP…PPGP). 2 stretches are compositionally biased toward basic and acidic residues: residues 511–520 (PGRKGDRGDP) and 571–582 (KGDDGSPGRDGL). Low complexity-rich tracts occupy residues 628-640 (LKGQ…DAGL) and 698-710 (TGAK…PGFA). The span at 711-720 (GADGGPGPRG) shows a compositional bias: gly residues. Positions 721–730 (LPGDAGREGF) are enriched in low complexity. A compositionally biased stretch (pro residues) spans 752 to 766 (DGSPGPIGLPGPDGP). Low complexity-rich tracts occupy residues 769-778 (ERGLPGEVLG), 813-823 (MPGMPGLKGQP), 831-844 (QPGL…HGFP), 1302-1328 (GSAA…KGWA), and 1400-1421 (QPGT…EMGP). Positions 1489 to 1712 (GYLLVKHSQT…SRCQVCMKNL (224 aa)) constitute a Collagen IV NC1 domain. Position 1490 is a 3'-bromotyrosine (Y1490). 6 cysteine pairs are disulfide-bonded: C1504/C1593, C1537/C1590, C1549/C1555, C1612/C1708, C1646/C1705, and C1658/C1665.

Belongs to the type IV collagen family. There are six type IV collagen isoforms, alpha 1(IV)-alpha 6(IV), each of which can form a triple helix structure with 2 other chains to generate type IV collagen network. Interacts with EFEMP2. Prolines at the third position of the tripeptide repeating unit (G-X-Y) are hydroxylated in some or all of the chains. In terms of processing, type IV collagens contain numerous cysteine residues which are involved in inter- and intramolecular disulfide bonding. 12 of these, located in the NC1 domain, are conserved in all known type IV collagens. Post-translationally, the trimeric structure of the NC1 domains is stabilized by covalent bonds between Lys and Met residues. Proteolytic processing produces the C-terminal NC1 peptide, canstatin.

The protein resides in the secreted. The protein localises to the extracellular space. It is found in the extracellular matrix. It localises to the basement membrane. Type IV collagen is the major structural component of glomerular basement membranes (GBM), forming a 'chicken-wire' meshwork together with laminins, proteoglycans and entactin/nidogen. Its function is as follows. Canstatin, a cleavage product corresponding to the collagen alpha 2(IV) NC1 domain, possesses both anti-angiogenic and anti-tumor cell activity. It inhibits proliferation and migration of endothelial cells, reduces mitochondrial membrane potential, and induces apoptosis. Specifically induces Fas-dependent apoptosis and activates procaspase-8 and -9 activity. Ligand for alphavbeta3 and alphavbeta5 integrins. The sequence is that of Collagen alpha-2(IV) chain from Homo sapiens (Human).